A 990-amino-acid chain; its full sequence is A-type ATP synthase subunit B (990 aa).

In terms of domain architecture, DOD-type homing endonuclease spans 491 to 614 (VAGLIASDGS…LQLLLKRLGV (124 aa)).

The protein belongs to the ATPase alpha/beta chains family. Has multiple subunits with at least A(3), B(3), C, D, E, F, H, I and proteolipid K(x). In terms of processing, this protein undergoes a protein self splicing that involves a post-translational excision of the VDE intervening region (intein) followed by peptide ligation.

The protein localises to the cell membrane. Functionally, component of the A-type ATP synthase that produces ATP from ADP in the presence of a proton gradient across the membrane. The B chain is a regulatory subunit. In Methanopyrus kandleri (strain AV19 / DSM 6324 / JCM 9639 / NBRC 100938), this protein is A-type ATP synthase subunit B.